The primary structure comprises 576 residues: Protein bfr2 (576 aa).

4 disordered regions span residues 1-227, 328-351, 414-433, and 548-576; these read MAPK…DTSD, QTQD…TSSL, ETTD…TSDP, and LRED…LFRS. A compositionally biased stretch (basic and acidic residues) spans 39 to 49; it reads VKDANAGREHY. Acidic residues-rich tracts occupy residues 95–123 and 142–206; these read EESE…EGSE and DVGM…DEEE. The segment covering 552-568 has biased composition (acidic residues); sequence DVSDDEDGEKSDEDVEE.

Belongs to the AATF family.

Its subcellular location is the nucleus. It localises to the nucleolus. The chain is Protein bfr2 (bfr2) from Emericella nidulans (strain FGSC A4 / ATCC 38163 / CBS 112.46 / NRRL 194 / M139) (Aspergillus nidulans).